A 318-amino-acid chain; its full sequence is tRNA dimethylallyltransferase (318 aa).

13–20 (GPTAVGKT) contributes to the ATP binding site. 15-20 (TAVGKT) provides a ligand contact to substrate. The interaction with substrate tRNA stretch occupies residues 38 to 41 (DSMQ).

Belongs to the IPP transferase family. Monomer. Mg(2+) serves as cofactor.

The catalysed reaction is adenosine(37) in tRNA + dimethylallyl diphosphate = N(6)-dimethylallyladenosine(37) in tRNA + diphosphate. Catalyzes the transfer of a dimethylallyl group onto the adenine at position 37 in tRNAs that read codons beginning with uridine, leading to the formation of N6-(dimethylallyl)adenosine (i(6)A). This chain is tRNA dimethylallyltransferase, found in Bacillus pumilus (strain SAFR-032).